A 479-amino-acid polypeptide reads, in one-letter code: Ribosomal RNA small subunit methyltransferase F (479 aa).

Residues 125 to 131 (AAAPGSK), Glu-149, Asp-176, and Asp-194 each bind S-adenosyl-L-methionine. Cys-247 (nucleophile) is an active-site residue.

It belongs to the class I-like SAM-binding methyltransferase superfamily. RsmB/NOP family.

Its subcellular location is the cytoplasm. The enzyme catalyses cytidine(1407) in 16S rRNA + S-adenosyl-L-methionine = 5-methylcytidine(1407) in 16S rRNA + S-adenosyl-L-homocysteine + H(+). Its function is as follows. Specifically methylates the cytosine at position 1407 (m5C1407) of 16S rRNA. This chain is Ribosomal RNA small subunit methyltransferase F, found in Escherichia coli O139:H28 (strain E24377A / ETEC).